Here is a 228-residue protein sequence, read N- to C-terminus: Urease accessory protein UreF (228 aa).

This sequence belongs to the UreF family. UreD, UreF and UreG form a complex that acts as a GTP-hydrolysis-dependent molecular chaperone, activating the urease apoprotein by helping to assemble the nickel containing metallocenter of UreC. The UreE protein probably delivers the nickel.

The protein resides in the cytoplasm. Its function is as follows. Required for maturation of urease via the functional incorporation of the urease nickel metallocenter. This is Urease accessory protein UreF from Blochmanniella pennsylvanica (strain BPEN).